We begin with the raw amino-acid sequence, 96 residues long: UPF0235 protein YPK_0828 (96 aa).

This sequence belongs to the UPF0235 family.

The sequence is that of UPF0235 protein YPK_0828 from Yersinia pseudotuberculosis serotype O:3 (strain YPIII).